Reading from the N-terminus, the 135-residue chain is Protein cornichon homolog 1 (135 aa).

3 consecutive transmembrane segments (helical) span residues 2-22 (VFVW…VIYQ), 51-71 (FVLQ…AMFL), and 111-131 (IVGL…TVLL).

This sequence belongs to the cornichon family. As to quaternary structure, interacts with HKT1;3.

Its subcellular location is the endoplasmic reticulum membrane. The protein localises to the golgi apparatus membrane. In terms of biological role, acts as a cargo receptor necessary for the transportation of the cation transporter HKT1;3 and possibly other secretory proteins from the endoplasmic reticulum (ER) in COPII-coated vesicles targeted to the Golgi apparatus. The protein is Protein cornichon homolog 1 of Oryza sativa subsp. japonica (Rice).